We begin with the raw amino-acid sequence, 214 residues long: Adenylate kinase (214 aa).

10–15 (GAGKGT) is a binding site for ATP. Residues 30 to 59 (STGDMLRAAVKAGTPLGLEAKKVMDAGQLV) are NMP. AMP-binding positions include Thr-31, Arg-36, 57–59 (QLV), 85–88 (GFPR), and Gln-92. Positions 122 to 159 (GRRVHPGSGRVYHVVFNPPKVEGKDDVTGEDLVIRPDD) are LID. ATP is bound by residues Arg-123 and 132–133 (VY). AMP contacts are provided by Arg-156 and Arg-167. Gln-200 lines the ATP pocket.

Belongs to the adenylate kinase family. Monomer.

Its subcellular location is the cytoplasm. The catalysed reaction is AMP + ATP = 2 ADP. The protein operates within purine metabolism; AMP biosynthesis via salvage pathway; AMP from ADP: step 1/1. Catalyzes the reversible transfer of the terminal phosphate group between ATP and AMP. Plays an important role in cellular energy homeostasis and in adenine nucleotide metabolism. The sequence is that of Adenylate kinase from Shewanella amazonensis (strain ATCC BAA-1098 / SB2B).